A 96-amino-acid chain; its full sequence is Large ribosomal subunit protein bL28 (96 aa).

The segment covering 1-22 (MSRSCELTGKGVQSGNNVSHAN) has biased composition (polar residues). Positions 1–24 (MSRSCELTGKGVQSGNNVSHANNK) are disordered.

The protein belongs to the bacterial ribosomal protein bL28 family.

This chain is Large ribosomal subunit protein bL28, found in Rhizobium meliloti (strain 1021) (Ensifer meliloti).